The sequence spans 761 residues: Phosphoribosylformylglycinamidine synthase subunit PurL (761 aa).

His49 is an active-site residue. 2 residues coordinate ATP: Tyr52 and Lys92. Glu94 contacts Mg(2+). Residues 95–98 (SHNH) and Arg117 each bind substrate. Catalysis depends on His96, which acts as the Proton acceptor. Mg(2+) is bound at residue Asp118. Gln241 serves as a coordination point for substrate. Asp269 serves as a coordination point for Mg(2+). Residue 318 to 320 (ESQ) coordinates substrate. 2 residues coordinate ATP: Asn502 and Gly539. Asn540 serves as a coordination point for Mg(2+). Ser542 lines the substrate pocket.

The protein belongs to the FGAMS family. As to quaternary structure, monomer. Part of the FGAM synthase complex composed of 1 PurL, 1 PurQ and 2 PurS subunits.

It is found in the cytoplasm. The enzyme catalyses N(2)-formyl-N(1)-(5-phospho-beta-D-ribosyl)glycinamide + L-glutamine + ATP + H2O = 2-formamido-N(1)-(5-O-phospho-beta-D-ribosyl)acetamidine + L-glutamate + ADP + phosphate + H(+). The protein operates within purine metabolism; IMP biosynthesis via de novo pathway; 5-amino-1-(5-phospho-D-ribosyl)imidazole from N(2)-formyl-N(1)-(5-phospho-D-ribosyl)glycinamide: step 1/2. In terms of biological role, part of the phosphoribosylformylglycinamidine synthase complex involved in the purines biosynthetic pathway. Catalyzes the ATP-dependent conversion of formylglycinamide ribonucleotide (FGAR) and glutamine to yield formylglycinamidine ribonucleotide (FGAM) and glutamate. The FGAM synthase complex is composed of three subunits. PurQ produces an ammonia molecule by converting glutamine to glutamate. PurL transfers the ammonia molecule to FGAR to form FGAM in an ATP-dependent manner. PurS interacts with PurQ and PurL and is thought to assist in the transfer of the ammonia molecule from PurQ to PurL. The protein is Phosphoribosylformylglycinamidine synthase subunit PurL of Chlorobium chlorochromatii (strain CaD3).